Here is a 755-residue protein sequence, read N- to C-terminus: MTVSILLDSLKDDGQRLSECRHESPFSILGPQPFKDKWIIRIWMPEASEVELITQQTKIKLQNPNHEWIFEGVLEKDPGNDYQIKVNRGGIEHVQHDPWSFRKEWMGEIDRHLFAEGNHHHIWRKMGAHLTEINKKQGVMFCLWAPHAKSVSVIGDLNSWDGRHHPMQKRLGGIWELFIPGLSEGDLYKYEIRTEKGHCYEKADPYGFQHEVRPAKSSVISKIDSFQWNDQSWISNRDNRDPLEQPISVYEMHLGSWMHASSDDPFINSNGEHRAPVPAADMKPGSRLLTYKELANKVIPYVKERGFTHIELMPISEHPFDGSWGYQVTGWYAPTSRFGSPDEFRAFVDSCHKEGIGIILDWVPGHFPKDQHGLAYFDGSHLYEHSDPRVGEHKEWGTLIFNYSRNEVRNFLVANLIFWFDQFHIDGIRVDAVASMLYKDYLRPEGEWIPNEDGGNENFEAVRFLQQANHVLFQHFPGALSIAEESTTWSGVTKPTDMDGLGFNLKWNMGWMHDMLDYFEIDPWFRQFNQNNITFSICYNFTENFMLALSHDEVVHGKSHLLHKMPGDDWQKYANTRALLAYMWTHPGKKTIFMGMEFGQRQEWNVWDDLQWDLLNYEPHKGIQKLVDDLNNLYKREPALWRNDFDEYGFQWIDCDDNKNSVISFMRREKTDGEWLVIVANFTPQNHSNYRIGVPVDGFYEEIFNTDASQYGGSNLGNMGGKSTDLYNIHGYENSIDLCLPPLSVLVLKHKSKKN.

The active-site Nucleophile is the aspartate 431. Residue glutamate 484 is the Proton donor of the active site.

This sequence belongs to the glycosyl hydrolase 13 family. GlgB subfamily. As to quaternary structure, monomer.

It carries out the reaction Transfers a segment of a (1-&gt;4)-alpha-D-glucan chain to a primary hydroxy group in a similar glucan chain.. Its pathway is glycan biosynthesis; glycogen biosynthesis. Its function is as follows. Catalyzes the formation of the alpha-1,6-glucosidic linkages in glycogen by scission of a 1,4-alpha-linked oligosaccharide from growing alpha-1,4-glucan chains and the subsequent attachment of the oligosaccharide to the alpha-1,6 position. The polypeptide is 1,4-alpha-glucan branching enzyme GlgB (Prochlorococcus marinus (strain NATL1A)).